We begin with the raw amino-acid sequence, 163 residues long: MAPITLSQIDEDLKDVIQTFFEIQSAVHGYLGPETQQELVKKLKSLTVSLQTLSAHAAPDPSYVQSPPSRTGLSPADPPVQSIQLPPEIIDYVDAARNPDIYTREFVELVQKSNQELKGKMEAFASFRDVLAKEMASAMPECKKEVERVVKATGGSVDGGGCG.

The interval 57–79 (AAPDPSYVQSPPSRTGLSPADPP) is disordered. The span at 63–72 (YVQSPPSRTG) shows a compositional bias: polar residues.

It belongs to the Mediator complex subunit 10 family. Component of the Mediator complex.

It is found in the nucleus. Component of the Mediator complex, a coactivator involved in the regulated transcription of nearly all RNA polymerase II-dependent genes. Mediator functions as a bridge to convey information from gene-specific regulatory proteins to the basal RNA polymerase II transcription machinery. Mediator is recruited to promoters by direct interactions with regulatory proteins and serves as a scaffold for the assembly of a functional preinitiation complex with RNA polymerase II and the general transcription factors. The chain is Mediator of RNA polymerase II transcription subunit 10 (NUT2) from Coccidioides immitis (strain RS) (Valley fever fungus).